A 174-amino-acid chain; its full sequence is MAPPPPSPPAVSLKVLLLLLRVLTGVFLVIALIILSTNSVTIVSQGSALKFHFKDVYAYRYMLSAAVIGLVYAVIQLFFTISEFATGVKNPFNYQLDFYGDKLISYLVATGSAAGFGVTKDLKDTFLALVALDSTDPVDKFFSKGYASASLLLFAFICLAVLSVFSSFAMAKRN.

Residues 1-14 (MAPPPPSPPAVSLK) are Cytoplasmic-facing. Residues 15–35 (VLLLLLRVLTGVFLVIALIIL) form a helical membrane-spanning segment. At 36-60 (STNSVTIVSQGSALKFHFKDVYAYR) the chain is on the extracellular side. The chain crosses the membrane as a helical span at residues 61–81 (YMLSAAVIGLVYAVIQLFFTI). The Cytoplasmic portion of the chain corresponds to 82–97 (SEFATGVKNPFNYQLD). Residues 98-118 (FYGDKLISYLVATGSAAGFGV) form a helical membrane-spanning segment. Topologically, residues 119–150 (TKDLKDTFLALVALDSTDPVDKFFSKGYASAS) are extracellular. A helical transmembrane segment spans residues 151–171 (LLLFAFICLAVLSVFSSFAMA). Topologically, residues 172-174 (KRN) are cytoplasmic.

The protein belongs to the Casparian strip membrane proteins (CASP) family. As to quaternary structure, homodimer and heterodimers.

It is found in the cell membrane. This chain is CASP-like protein 4D2, found in Arabidopsis thaliana (Mouse-ear cress).